The primary structure comprises 194 residues: Peptidyl-tRNA hydrolase (194 aa).

Residue tyrosine 16 coordinates tRNA. Histidine 21 acts as the Proton acceptor in catalysis. TRNA-binding residues include phenylalanine 67, asparagine 69, and asparagine 115.

It belongs to the PTH family. In terms of assembly, monomer.

Its subcellular location is the cytoplasm. It catalyses the reaction an N-acyl-L-alpha-aminoacyl-tRNA + H2O = an N-acyl-L-amino acid + a tRNA + H(+). Its function is as follows. Hydrolyzes ribosome-free peptidyl-tRNAs (with 1 or more amino acids incorporated), which drop off the ribosome during protein synthesis, or as a result of ribosome stalling. In terms of biological role, catalyzes the release of premature peptidyl moieties from peptidyl-tRNA molecules trapped in stalled 50S ribosomal subunits, and thus maintains levels of free tRNAs and 50S ribosomes. The protein is Peptidyl-tRNA hydrolase of Sodalis glossinidius (strain morsitans).